The following is a 289-amino-acid chain: ATP synthase gamma chain (289 aa).

This sequence belongs to the ATPase gamma chain family. In terms of assembly, F-type ATPases have 2 components, CF(1) - the catalytic core - and CF(0) - the membrane proton channel. CF(1) has five subunits: alpha(3), beta(3), gamma(1), delta(1), epsilon(1). CF(0) has three main subunits: a, b and c.

Its subcellular location is the cell membrane. Its function is as follows. Produces ATP from ADP in the presence of a proton gradient across the membrane. The gamma chain is believed to be important in regulating ATPase activity and the flow of protons through the CF(0) complex. The polypeptide is ATP synthase gamma chain (Buchnera aphidicola subsp. Melaphis rhois).